A 216-amino-acid polypeptide reads, in one-letter code: Uracil phosphoribosyltransferase (216 aa).

GTP-binding positions include arginine 30, arginine 39, 73-76, and lysine 75; that span reads ASKI. Arginine 83 contributes to the 5-phospho-alpha-D-ribose 1-diphosphate binding site. Lysine 100 is a GTP binding site. Arginine 108 contributes to the 5-phospho-alpha-D-ribose 1-diphosphate binding site. GTP is bound at residue arginine 129. Residues aspartate 135 and 135 to 143 contribute to the 5-phospho-alpha-D-ribose 1-diphosphate site; that span reads DPMLATGGT. Tyrosine 199 is a D-ribose 5-phosphate binding site. Uracil is bound by residues isoleucine 200 and 205-207; that span reads GDF. 5-phospho-alpha-D-ribose 1-diphosphate is bound at residue aspartate 206.

The protein belongs to the UPRTase family. Mg(2+) serves as cofactor.

The catalysed reaction is UMP + diphosphate = 5-phospho-alpha-D-ribose 1-diphosphate + uracil. The protein operates within pyrimidine metabolism; UMP biosynthesis via salvage pathway; UMP from uracil: step 1/1. With respect to regulation, allosterically activated by GTP. In terms of biological role, catalyzes the conversion of uracil and 5-phospho-alpha-D-ribose 1-diphosphate (PRPP) to UMP and diphosphate. This Dictyostelium discoideum (Social amoeba) protein is Uracil phosphoribosyltransferase (uprt).